The sequence spans 406 residues: S-adenosylmethionine synthase (406 aa).

His17 contacts ATP. Asp19 lines the Mg(2+) pocket. Glu45 contacts K(+). L-methionine-binding residues include Glu58 and Gln101. Residues 101-111 are flexible loop; the sequence is QSAEINQGVAR. Residues 178-180, Asp258, 264-265, Ala281, and Lys285 contribute to the ATP site; these read DGK and RK. L-methionine is bound at residue Asp258. L-methionine is bound at residue Lys289.

Belongs to the AdoMet synthase family. In terms of assembly, homotetramer; dimer of dimers. Mg(2+) is required as a cofactor. The cofactor is K(+).

It is found in the cytoplasm. The enzyme catalyses L-methionine + ATP + H2O = S-adenosyl-L-methionine + phosphate + diphosphate. It participates in amino-acid biosynthesis; S-adenosyl-L-methionine biosynthesis; S-adenosyl-L-methionine from L-methionine: step 1/1. Catalyzes the formation of S-adenosylmethionine (AdoMet) from methionine and ATP. The overall synthetic reaction is composed of two sequential steps, AdoMet formation and the subsequent tripolyphosphate hydrolysis which occurs prior to release of AdoMet from the enzyme. The chain is S-adenosylmethionine synthase from Bifidobacterium longum subsp. infantis (strain ATCC 15697 / DSM 20088 / JCM 1222 / NCTC 11817 / S12).